Reading from the N-terminus, the 446-residue chain is D(1A) dopamine receptor (446 aa).

Residues 1–22 (MAPNTSTMDEAGLPAERDFSFR) lie on the Extracellular side of the membrane. Residue Asn-4 is glycosylated (N-linked (GlcNAc...) asparagine). The helical transmembrane segment at 23–48 (ILTACFLSLLILSTLLGNTLVCAAVI) threads the bilayer. Topologically, residues 49-59 (RFRHLRSKVTN) are cytoplasmic. Residues 60–86 (FFVISLAVSDLLVAVLVMPWKAVAEIA) traverse the membrane as a helical segment. Residues 87–95 (GFWPLGPFC) lie on the Extracellular side of the membrane. A disulfide bond links Cys-95 and Cys-186. The helical transmembrane segment at 96-118 (NIWVAFDIMCSTASILNLCVISV) threads the bilayer. At 119-137 (DRYWAISSPFQYERKMTPK) the chain is on the cytoplasmic side. The helical transmembrane segment at 138 to 162 (AAFILISVAWTLSVLISFIPVQLSW) threads the bilayer. The Extracellular portion of the chain corresponds to 163–192 (HKAKPTWPLDGNFTSLEDTEDDNCDTRLSR). A helical membrane pass occupies residues 193 to 218 (TYAISSSLISFYIPVAIMIVTYTSIY). At 219–272 (RIAQKQIRRISALERAAVHAKNCQTTAGNGNPVECAQSESSFKMSFKRETKVLK) the chain is on the cytoplasmic side. Residues 273–299 (TLSVIMGVFVCCWLPFFISNCMVPFCG) traverse the membrane as a helical segment. The Extracellular segment spans residues 300 to 312 (SEETQPFCIDSIT). The chain crosses the membrane as a helical span at residues 313 to 337 (FDVFVWFGWANSSLNPIIYAFNADF). Over 338–446 (QKAFSTLLGC…PVTHSGQHST (109 aa)) the chain is Cytoplasmic. Residues Cys-347 and Cys-351 are each lipidated (S-palmitoyl cysteine).

It belongs to the G-protein coupled receptor 1 family. In terms of assembly, interacts with DNAJC14 via its C-terminus PubMed:11331877. Interacts with DRD2. Interacts with DORIP1. N-glycosylated. In terms of tissue distribution, brain, in the striatum, the nucleus accumbens, and the olfactory tubercle.

It is found in the cell membrane. The protein resides in the endoplasmic reticulum membrane. The protein localises to the cell projection. Its subcellular location is the dendrite. It localises to the cilium membrane. It is found in the dendritic spine. Dopamine receptor whose activity is mediated by G proteins which activate adenylyl cyclase. In Rattus norvegicus (Rat), this protein is D(1A) dopamine receptor (Drd1).